The primary structure comprises 1297 residues: Phosphoribosylformylglycinamidine synthase (1297 aa).

Residues glycine 307–aspartate 318 and alanine 678 contribute to the ATP site. 3 residues coordinate Mg(2+): glutamate 718, asparagine 722, and aspartate 886. Positions methionine 1044–glycine 1297 constitute a Glutamine amidotransferase type-1 domain. The active-site Nucleophile is the cysteine 1137. Active-site residues include histidine 1262 and glutamate 1264.

It in the N-terminal section; belongs to the FGAMS family. Monomer.

The protein localises to the cytoplasm. It catalyses the reaction N(2)-formyl-N(1)-(5-phospho-beta-D-ribosyl)glycinamide + L-glutamine + ATP + H2O = 2-formamido-N(1)-(5-O-phospho-beta-D-ribosyl)acetamidine + L-glutamate + ADP + phosphate + H(+). It functions in the pathway purine metabolism; IMP biosynthesis via de novo pathway; 5-amino-1-(5-phospho-D-ribosyl)imidazole from N(2)-formyl-N(1)-(5-phospho-D-ribosyl)glycinamide: step 1/2. Its function is as follows. Phosphoribosylformylglycinamidine synthase involved in the purines biosynthetic pathway. Catalyzes the ATP-dependent conversion of formylglycinamide ribonucleotide (FGAR) and glutamine to yield formylglycinamidine ribonucleotide (FGAM) and glutamate. This Vibrio vulnificus (strain CMCP6) protein is Phosphoribosylformylglycinamidine synthase.